We begin with the raw amino-acid sequence, 469 residues long: Trehalose-6-phosphate synthase (469 aa).

Residue Arg-10 participates in D-glucose 6-phosphate binding. 22-23 (GG) contributes to the UDP-alpha-D-glucose binding site. The D-glucose 6-phosphate site is built by Tyr-77 and Asp-131. 2 residues coordinate UDP-alpha-D-glucose: Arg-262 and Lys-267. D-glucose 6-phosphate is bound at residue Arg-300. 365-369 (LVAKE) serves as a coordination point for UDP-alpha-D-glucose.

It belongs to the glycosyltransferase 20 family. Homotetramer.

The enzyme catalyses D-glucose 6-phosphate + UDP-alpha-D-glucose = alpha,alpha-trehalose 6-phosphate + UDP + H(+). The protein operates within glycan biosynthesis; trehalose biosynthesis. Functionally, probably involved in the osmoprotection via the biosynthesis of trehalose. Catalyzes the transfer of glucose from UDP-alpha-D-glucose (UDP-Glc) to D-glucose 6-phosphate (Glc-6-P) to form trehalose-6-phosphate. Acts with retention of the anomeric configuration of the UDP-sugar donor. In Sodalis glossinidius (strain morsitans), this protein is Trehalose-6-phosphate synthase.